Consider the following 481-residue polypeptide: CASP8 and FADD-like apoptosis regulator (481 aa).

DED domains lie at 6–78 (VSAE…RILK) and 97–172 (DYRV…LNTK). Positions 6-200 (VSAEVIHQVE…QASLPKLSIK (195 aa)) are interaction with CASP8. Positions 6–229 (VSAEVIHQVE…DSQRTLVKTS (224 aa)) are interaction with FADD. The tract at residues 6–307 (VSAEVIHQVE…YASMAQHQDY (302 aa)) is interaction with CASP8 propeptide. The tract at residues 197 to 436 (LSIKYNSRLQ…KLSQQLKQGR (240 aa)) is interaction with CASP3. The interaction with TRAF1 and TRAF2 stretch occupies residues 197–481 (LSIKYNSRLQ…LRKKLILAPT (285 aa)). The interval 219–481 (RDSQRTLVKT…LRKKLILAPT (263 aa)) is interaction with CASP8 subunits p18 and p10. Residues 265–360 (DTKYLQETFT…RGKPKLFFIQ (96 aa)) form a caspase region. The interaction with CASP8 stretch occupies residues 372–481 (SSLEVDGPSI…LRKKLILAPT (110 aa)).

This sequence belongs to the peptidase C14A family. In terms of assembly, TNFRSF6 stimulation triggers recruitment to the death-inducing signaling complex (DISC) formed by TNFRSF6, FADD and CASP8. A proteolytic fragment (p43) stays associated with the DISC. Interacts with RIPK1. Post-translationally, proteolytically processed by CASP8 generating subunits p43 and p12. In terms of tissue distribution, highly expressed in heart.

Its function is as follows. Apoptosis regulator protein which may function as a crucial link between cell survival and cell death pathways in mammalian cells. Acts as an inhibitor of TNFRSF6 mediated apoptosis. A proteolytic fragment (p43) is likely retained in the death-inducing signaling complex (DISC) thereby blocking further recruitment and processing of caspase-8 at the complex. Full length and shorter isoforms have been shown either to induce apoptosis or to reduce TNFRSF-triggered apoptosis. Lacks enzymatic (caspase) activity. The polypeptide is CASP8 and FADD-like apoptosis regulator (Cflar) (Mus musculus (Mouse)).